The sequence spans 945 residues: Argonaute protein wago-1 (945 aa).

The segment covering 1–20 (MSPHPPQPHPPMPPMPPVTA) has biased composition (pro residues). Residues 1–41 (MSPHPPQPHPPMPPMPPVTAPPGAMTPMPPVPADAQKLHQS) form a disordered region. The PAZ domain occupies 322–432 (TVIQKLFDIT…FPAELMTVSR (111 aa)). Residues 636–899 (VKDGKRLTLE…PLYVANEYAK (264 aa)) form the Piwi domain.

Belongs to the Argonaute family. WAGO subfamily. In terms of assembly, interacts with rde-12. Interacts with znfx-1. In terms of tissue distribution, enriched in sperm and oocytes.

The protein resides in the cytoplasmic granule. Its function is as follows. Argonaute protein which is involved in the endogenous small interfering RNA (endo-siRNA) pathway. Interacts with secondary 22G-RNAs, which are RNA-dependent RNA polymerase-derived endo-siRNAs, typically 22 nucleotides in length with a 5'guanosine residue. In the germline, functions in a genome surveillance system to silence transposons and aberrant transcripts. The protein is Argonaute protein wago-1 of Caenorhabditis elegans.